The following is a 916-amino-acid chain: Protein translocase subunit SecA (916 aa).

ATP is bound by residues glutamine 87, 105 to 109 (GEGKT), and aspartate 507. 4 residues coordinate Zn(2+): cysteine 900, cysteine 902, cysteine 911, and histidine 912.

The protein belongs to the SecA family. Monomer and homodimer. Part of the essential Sec protein translocation apparatus which comprises SecA, SecYEG and auxiliary proteins SecDF-YajC and YidC. The cofactor is Zn(2+).

The protein localises to the cell inner membrane. Its subcellular location is the cytoplasm. The catalysed reaction is ATP + H2O + cellular proteinSide 1 = ADP + phosphate + cellular proteinSide 2.. Part of the Sec protein translocase complex. Interacts with the SecYEG preprotein conducting channel. Has a central role in coupling the hydrolysis of ATP to the transfer of proteins into and across the cell membrane, serving both as a receptor for the preprotein-SecB complex and as an ATP-driven molecular motor driving the stepwise translocation of polypeptide chains across the membrane. The polypeptide is Protein translocase subunit SecA (Neisseria meningitidis serogroup C / serotype 2a (strain ATCC 700532 / DSM 15464 / FAM18)).